The chain runs to 129 residues: M-zodatoxin-Lt8d (129 aa).

An N-terminal signal peptide occupies residues 1 to 20 (MKYFVVALALVAAFACIAES). Residues 21–60 (KPAESEHELAEVEEENELADLEDAVWLEHLADLSDLEEAR) constitute a propeptide that is removed on maturation. The short motif at 57-60 (EEAR) is the Processing quadruplet motif element.

Cleavage of the propeptide depends on the processing quadruplet motif (XXXR, with at least one of X being E). Expressed by the venom gland.

It is found in the secreted. Insecticidal, cytolytic and antimicrobial peptide. Forms voltage-dependent, ion-permeable channels in membranes. At high concentration causes cell membrane lysis. The sequence is that of M-zodatoxin-Lt8d (cit 1-4) from Lachesana tarabaevi (Spider).